The following is a 99-amino-acid chain: Translation initiation factor 1A (99 aa).

Positions 11 to 84 (RRVRTPRRGE…EKADIVWRYT (74 aa)) constitute an S1-like domain.

It belongs to the eIF-1A family.

In terms of biological role, seems to be required for maximal rate of protein biosynthesis. Enhances ribosome dissociation into subunits and stabilizes the binding of the initiator Met-tRNA(I) to 40 S ribosomal subunits. This chain is Translation initiation factor 1A (eIF1A), found in Methanothermobacter thermautotrophicus (strain ATCC 29096 / DSM 1053 / JCM 10044 / NBRC 100330 / Delta H) (Methanobacterium thermoautotrophicum).